The chain runs to 415 residues: Esterase FrsA (415 aa).

Belongs to the FrsA family.

It carries out the reaction a carboxylic ester + H2O = an alcohol + a carboxylate + H(+). Functionally, catalyzes the hydrolysis of esters. The protein is Esterase FrsA of Serratia proteamaculans (strain 568).